A 356-amino-acid chain; its full sequence is Probable dual-specificity RNA methyltransferase RlmN (356 aa).

The active-site Proton acceptor is the Glu-100. Positions 106-340 (TQQRLTVCLS…VSLRASRGLD (235 aa)) constitute a Radical SAM core domain. Cys-113 and Cys-345 are disulfide-bonded. Residues Cys-120, Cys-124, and Cys-127 each coordinate [4Fe-4S] cluster. S-adenosyl-L-methionine is bound by residues 167–168 (GE), Ser-197, 226–228 (SLH), and Asn-302. Cys-345 functions as the S-methylcysteine intermediate in the catalytic mechanism.

The protein belongs to the radical SAM superfamily. RlmN family. [4Fe-4S] cluster is required as a cofactor.

It is found in the cytoplasm. It catalyses the reaction adenosine(2503) in 23S rRNA + 2 reduced [2Fe-2S]-[ferredoxin] + 2 S-adenosyl-L-methionine = 2-methyladenosine(2503) in 23S rRNA + 5'-deoxyadenosine + L-methionine + 2 oxidized [2Fe-2S]-[ferredoxin] + S-adenosyl-L-homocysteine. The enzyme catalyses adenosine(37) in tRNA + 2 reduced [2Fe-2S]-[ferredoxin] + 2 S-adenosyl-L-methionine = 2-methyladenosine(37) in tRNA + 5'-deoxyadenosine + L-methionine + 2 oxidized [2Fe-2S]-[ferredoxin] + S-adenosyl-L-homocysteine. Functionally, specifically methylates position 2 of adenine 2503 in 23S rRNA and position 2 of adenine 37 in tRNAs. The polypeptide is Probable dual-specificity RNA methyltransferase RlmN (Prochlorococcus marinus (strain MIT 9303)).